The sequence spans 103 residues: ATP synthase subunit f, mitochondrial (103 aa).

The N-terminal 6 residues, Met-1–Gln-6, are a transit peptide targeting the mitochondrion.

F-type ATP synthases have 2 components, the catalytic core F(1) and the membrane-embedded component F(0), linked together by a central stalk and a peripheral stalk. The central stalk, also called rotor shaft, is often seen as part of F(1). The peripheral stalk is seen as part of F(0). F(0) contains the membrane channel next to the rotor. F-type ATP synthases form dimers but each monomer functions independently in ATP generation. The dimer consists of 17 different polypeptides: ATP1 (subunit alpha, 3 molecules per monomer, part of F(1)), ATP2 (subunit beta, 3 copies per monomer, part of F(1)), ATP3 (subunit gamma, part of the central stalk), ATP4 (subunit b, part of the peripheral stalk), ATP5/OSCP (subunit 5/OSCP, part of the peripheral stalk), ATP6 (subunit a, part of the peripheral stalk), ATP7 (subunit d, part of the peripheral stalk), ATP8 (subunit 8, part of the peripheral stalk), OLI1 (subunit c, part of the rotor, 10 molecules per monomer), ATP14 (subunit h, part of the peripheral stalk), ATP15 (subunit epsilon, part of the central stalk), ATP16 (subunit delta, part of the central stalk), ATP17 (subunit f, part of the peripheral stalk), ATP18 (subunit i/j, part of the peripheral stalk), ATP19 (subunit k, dimer-specific, at interface between monomers), ATP20 (subunit g, at interface between monomers), TIM11 (subunit e, at interface between monomers).

It is found in the mitochondrion inner membrane. Functionally, mitochondrial membrane ATP synthase (F(1)F(0) ATP synthase or Complex V) produces ATP from ADP in the presence of a proton gradient across the membrane which is generated by electron transport complexes of the respiratory chain. F-type ATP synthases consist of two structural domains, F(1) - containing the extramembraneous catalytic core, and F(0) - containing the membrane proton channel, linked together by a central stalk and a peripheral stalk. During catalysis, ATP synthesis in the catalytic domain of F(1) is coupled via a rotary mechanism of the central stalk subunits to proton translocation. Part of the complex F(0) domain. Minor subunit located with subunit a/ATP6 in the membrane. This Yarrowia lipolytica (strain CLIB 122 / E 150) (Yeast) protein is ATP synthase subunit f, mitochondrial.